A 408-amino-acid chain; its full sequence is Peptidase T (408 aa).

His-78 lines the Zn(2+) pocket. The active site involves Asp-80. Residue Asp-141 participates in Zn(2+) binding. Residue Glu-175 is the Proton acceptor of the active site. Zn(2+) contacts are provided by Glu-176, Asp-198, and His-380.

Belongs to the peptidase M20B family. It depends on Zn(2+) as a cofactor.

The protein resides in the cytoplasm. It catalyses the reaction Release of the N-terminal residue from a tripeptide.. Functionally, cleaves the N-terminal amino acid of tripeptides. In Halothermothrix orenii (strain H 168 / OCM 544 / DSM 9562), this protein is Peptidase T.